The chain runs to 493 residues: Dipeptide and tripeptide permease B (493 aa).

The Cytoplasmic segment spans residues M1–R27. The chain crosses the membrane as a helical span at residues F28–S48. At Q49–A52 the chain is on the periplasmic side. A helical membrane pass occupies residues F53–V73. Residues G74–R82 are Cytoplasmic-facing. The helical transmembrane segment at T83–Y103 threads the bilayer. Residues Q104–N106 lie on the Periplasmic side of the membrane. The helical transmembrane segment at L107–A127 threads the bilayer. Residues S128–T146 are Cytoplasmic-facing. A helical transmembrane segment spans residues L147–A167. Topologically, residues E168–R169 are periplasmic. A helical transmembrane segment spans residues F170–Y190. Topologically, residues F191 to R212 are cytoplasmic. A run of 2 helical transmembrane segments spans residues N213 to N233 and H234 to F254. At R255 to K267 the chain is on the cytoplasmic side. A helical transmembrane segment spans residues M268–M288. Over P289–P311 the chain is Periplasmic. The helical transmembrane segment at V312–I332 threads the bilayer. Residues Y333 to T350 lie on the Cytoplasmic side of the membrane. The chain crosses the membrane as a helical span at residues L351–A371. Residues D372–P379 lie on the Periplasmic side of the membrane. The chain crosses the membrane as a helical span at residues W380–G400. Residues L401–Q424 lie on the Cytoplasmic side of the membrane. The helical transmembrane segment at A425–T445 threads the bilayer. Over D446 to D456 the chain is Periplasmic. A helical transmembrane segment spans residues V457 to P477. At W478–A493 the chain is on the cytoplasmic side.

The protein belongs to the major facilitator superfamily. Proton-dependent oligopeptide transporter (POT/PTR) (TC 2.A.17) family. DtpB subfamily.

Its subcellular location is the cell inner membrane. Its function is as follows. Proton-dependent permease that transports di- and tripeptides. In Yersinia enterocolitica serotype O:8 / biotype 1B (strain NCTC 13174 / 8081), this protein is Dipeptide and tripeptide permease B.